The following is a 691-amino-acid chain: Guanylate cyclase soluble subunit alpha-1 (691 aa).

At Ser267 the chain carries Phosphoserine. The 128-residue stretch at 480 to 607 folds into the Guanylate cyclase domain; that stretch reads VTMLFSDIVG…GNNVTLANKF (128 aa).

This sequence belongs to the adenylyl cyclase class-4/guanylyl cyclase family. As to quaternary structure, the active enzyme is formed by a heterodimer of an alpha and a beta subunit. Heterodimer with GUCY1B1. Mg(2+) is required as a cofactor. It depends on Mn(2+) as a cofactor.

It localises to the cytoplasm. The enzyme catalyses GTP = 3',5'-cyclic GMP + diphosphate. Its activity is regulated as follows. Activated by nitric oxide in the presence of magnesium or manganese ions. The chain is Guanylate cyclase soluble subunit alpha-1 (Gucy1a1) from Mus musculus (Mouse).